Consider the following 473-residue polypeptide: P3 protein (473 aa).

The next 9 membrane-spanning stretches (helical) occupy residues 25–45 (FVGM…AQVM), 221–241 (PMLL…FLMA), 249–269 (ALAL…SYLF), 277–297 (VTLA…FLPL), 316–336 (ISKI…GVVI), 356–376 (FILL…ILVG), 381–401 (IVLV…SLAI), 413–433 (VSIE…QLSL), and 446–466 (FIVA…QFIY).

The protein belongs to the bile acid:sodium symporter (BASS) (TC 2.A.28) family.

The protein resides in the membrane. In terms of biological role, the ubiquitous expression and the conservation of the sequence in distant animal species suggest that the gene codes for a protein with housekeeping functions. The protein is P3 protein (Slc10a3) of Mus musculus (Mouse).